A 479-amino-acid polypeptide reads, in one-letter code: GTPase Obg (479 aa).

Positions 2–159 (PRFVDRVVIH…RDLTLELKTV (158 aa)) constitute an Obg domain. One can recognise an OBG-type G domain in the interval 160-340 (ADVGLVGFPS…LIFGLWQMVS (181 aa)). GTP contacts are provided by residues 166 to 173 (GFPSAGKS), 191 to 195 (FTTLV), 212 to 215 (DVPG), 292 to 295 (NKID), and 321 to 323 (STV). 2 residues coordinate Mg(2+): Ser-173 and Thr-193. The region spanning 358 to 436 (PVPVDDSGFD…IGEMTFDWEP (79 aa)) is the OCT domain. Positions 438-479 (TPAGGHVAMSGRGTDVRLERSDRVGAAERKAARRQRRERDDD) are disordered. The span at 451-467 (TDVRLERSDRVGAAERK) shows a compositional bias: basic and acidic residues.

It belongs to the TRAFAC class OBG-HflX-like GTPase superfamily. OBG GTPase family. In terms of assembly, monomer. Mg(2+) serves as cofactor.

Its subcellular location is the cytoplasm. An essential GTPase which binds GTP, GDP and possibly (p)ppGpp with moderate affinity, with high nucleotide exchange rates and a fairly low GTP hydrolysis rate. Plays a role in control of the cell cycle, stress response, ribosome biogenesis and in those bacteria that undergo differentiation, in morphogenesis control. The chain is GTPase Obg from Mycobacterium marinum (strain ATCC BAA-535 / M).